Here is a 170-residue protein sequence, read N- to C-terminus: tRNA-splicing endonuclease (170 aa).

Catalysis depends on residues Tyr-110, His-116, and Lys-147.

This sequence belongs to the tRNA-intron endonuclease family. Archaeal short subfamily. Homotetramer; although the tetramer contains four active sites, only two participate in the cleavage. Therefore, it should be considered as a dimer of dimers.

It carries out the reaction pretRNA = a 3'-half-tRNA molecule with a 5'-OH end + a 5'-half-tRNA molecule with a 2',3'-cyclic phosphate end + an intron with a 2',3'-cyclic phosphate and a 5'-hydroxyl terminus.. Endonuclease that removes tRNA introns. Cleaves pre-tRNA at the 5'- and 3'-splice sites to release the intron. The products are an intron and two tRNA half-molecules bearing 2',3' cyclic phosphate and 5'-OH termini. Recognizes a pseudosymmetric substrate in which 2 bulged loops of 3 bases are separated by a stem of 4 bp. In Pyrococcus horikoshii (strain ATCC 700860 / DSM 12428 / JCM 9974 / NBRC 100139 / OT-3), this protein is tRNA-splicing endonuclease.